Here is a 155-residue protein sequence, read N- to C-terminus: SsrA-binding protein (155 aa).

Basic and acidic residues predominate over residues 123-142 (DLHDKRETEKKRDWEREKGQ). Positions 123 to 155 (DLHDKRETEKKRDWEREKGQLMRHKISSPRKDT) are disordered. Residues 143–155 (LMRHKISSPRKDT) show a composition bias toward basic residues.

It belongs to the SmpB family.

The protein resides in the cytoplasm. Functionally, required for rescue of stalled ribosomes mediated by trans-translation. Binds to transfer-messenger RNA (tmRNA), required for stable association of tmRNA with ribosomes. tmRNA and SmpB together mimic tRNA shape, replacing the anticodon stem-loop with SmpB. tmRNA is encoded by the ssrA gene; the 2 termini fold to resemble tRNA(Ala) and it encodes a 'tag peptide', a short internal open reading frame. During trans-translation Ala-aminoacylated tmRNA acts like a tRNA, entering the A-site of stalled ribosomes, displacing the stalled mRNA. The ribosome then switches to translate the ORF on the tmRNA; the nascent peptide is terminated with the 'tag peptide' encoded by the tmRNA and targeted for degradation. The ribosome is freed to recommence translation, which seems to be the essential function of trans-translation. This chain is SsrA-binding protein, found in Methylibium petroleiphilum (strain ATCC BAA-1232 / LMG 22953 / PM1).